Consider the following 928-residue polypeptide: Chitin synthase 2 (928 aa).

Disordered stretches follow at residues Met-1–Ala-45 and Ala-110–Pro-179. Over residues Pro-17 to Pro-28 the composition is skewed to polar residues. Positions Pro-130–Thr-140 are enriched in basic and acidic residues. Helical transmembrane passes span Ser-472–Leu-492, Trp-570–Trp-589, Leu-613–Leu-633, Thr-644–Leu-664, Met-678–Leu-698, Phe-723–Leu-743, Cys-753–Phe-773, Val-854–Phe-874, and Val-893–Leu-913.

It belongs to the chitin synthase family. Class I subfamily.

The protein localises to the cell membrane. The catalysed reaction is [(1-&gt;4)-N-acetyl-beta-D-glucosaminyl](n) + UDP-N-acetyl-alpha-D-glucosamine = [(1-&gt;4)-N-acetyl-beta-D-glucosaminyl](n+1) + UDP + H(+). Polymerizes chitin, a structural polymer of the cell wall and septum, by transferring the sugar moiety of UDP-GlcNAc to the non-reducing end of the growing chitin polymer. CHS2 plays a synergistic role to CHS1 in normal yeast cell reproductive growth, even if this role is less predominant than for CHS1. With CHS3, plays an important role in virulence. In Exophiala dermatitidis (Black yeast-like fungus), this protein is Chitin synthase 2.